The sequence spans 221 residues: MQSQLSLMGKKEGMIHVFDKDGNLVACSVISMSSNVVTQIKVDSTDGYNAIQMGANEINVPEKTLHKRVNKPSIGHFKKSGSRVFRELKEVRLSEEAVNEVSLGSEFGLEVFESVSSIDVSGVSKGKGFQGVMKRFGFRGGPQSHGSGFHRHAGSIGMRSTPGRCFPGSKRPSHMGTVNVTVKNLEVIKIDLEKKVLLVKGAIPGPRGSVVVVRRSSRAKG.

This sequence belongs to the universal ribosomal protein uL3 family. As to quaternary structure, part of the 50S ribosomal subunit. Forms a cluster with proteins L14 and L19.

Functionally, one of the primary rRNA binding proteins, it binds directly near the 3'-end of the 23S rRNA, where it nucleates assembly of the 50S subunit. In Chlamydia abortus (strain DSM 27085 / S26/3) (Chlamydophila abortus), this protein is Large ribosomal subunit protein uL3.